The primary structure comprises 307 residues: MQAALTAFFMLLFSLLSLLGIAANGFIVLVLGREWLRYGRLLPLDMILISLGASRFCLQLVGTVHNFYYSAQKVEYSGGLGRQFFHLHWHFLNSATFWFCSWLSVLFCVKIANITHPTFLWLKWRFPGWVPWLLLGSVLISFIITLLFFWVNYPAYQEFLIRKFSVNMTYKWNTRIETYYFPSLKLVIWSIPFSVFLVSIMLLINSLRRHTQRMQHNGHSLQDPSTQAHTRALKSLISFLILYALSFLSLIIDATKFISMQNDFYWPWQIAVYLCISVHPFILIFSNLKLRSVFSQLLLLARGFWVA.

The Extracellular portion of the chain corresponds to 1–7 (MQAALTA). A helical transmembrane segment spans residues 8 to 28 (FFMLLFSLLSLLGIAANGFIV). Topologically, residues 29–40 (LVLGREWLRYGR) are cytoplasmic. Residues 41 to 61 (LLPLDMILISLGASRFCLQLV) traverse the membrane as a helical segment. At 62–88 (GTVHNFYYSAQKVEYSGGLGRQFFHLH) the chain is on the extracellular side. Residues 89-109 (WHFLNSATFWFCSWLSVLFCV) traverse the membrane as a helical segment. Topologically, residues 110-129 (KIANITHPTFLWLKWRFPGW) are cytoplasmic. Residues 130–150 (VPWLLLGSVLISFIITLLFFW) form a helical membrane-spanning segment. The Extracellular segment spans residues 151-183 (VNYPAYQEFLIRKFSVNMTYKWNTRIETYYFPS). The N-linked (GlcNAc...) asparagine glycan is linked to Asn167. A helical membrane pass occupies residues 184-204 (LKLVIWSIPFSVFLVSIMLLI). Residues 205 to 234 (NSLRRHTQRMQHNGHSLQDPSTQAHTRALK) are Cytoplasmic-facing. Residues 235–255 (SLISFLILYALSFLSLIIDAT) form a helical membrane-spanning segment. At 256 to 264 (KFISMQNDF) the chain is on the extracellular side. A helical membrane pass occupies residues 265–285 (YWPWQIAVYLCISVHPFILIF). Over 286–307 (SNLKLRSVFSQLLLLARGFWVA) the chain is Cytoplasmic.

This sequence belongs to the G-protein coupled receptor T2R family.

The protein localises to the membrane. Its function is as follows. Receptor that may play a role in the perception of bitterness and is gustducin-linked. May play a role in sensing the chemical composition of the gastrointestinal content. The activity of this receptor may stimulate alpha gustducin, mediate PLC-beta-2 activation and lead to the gating of TRPM5. The chain is Taste receptor type 2 member 41 (TAS2R41) from Pan troglodytes (Chimpanzee).